We begin with the raw amino-acid sequence, 178 residues long: ATP synthase subunit delta (178 aa).

Belongs to the ATPase delta chain family. In terms of assembly, F-type ATPases have 2 components, F(1) - the catalytic core - and F(0) - the membrane proton channel. F(1) has five subunits: alpha(3), beta(3), gamma(1), delta(1), epsilon(1). F(0) has three main subunits: a(1), b(2) and c(10-14). The alpha and beta chains form an alternating ring which encloses part of the gamma chain. F(1) is attached to F(0) by a central stalk formed by the gamma and epsilon chains, while a peripheral stalk is formed by the delta and b chains.

The protein resides in the cell inner membrane. Functionally, f(1)F(0) ATP synthase produces ATP from ADP in the presence of a proton or sodium gradient. F-type ATPases consist of two structural domains, F(1) containing the extramembraneous catalytic core and F(0) containing the membrane proton channel, linked together by a central stalk and a peripheral stalk. During catalysis, ATP synthesis in the catalytic domain of F(1) is coupled via a rotary mechanism of the central stalk subunits to proton translocation. Its function is as follows. This protein is part of the stalk that links CF(0) to CF(1). It either transmits conformational changes from CF(0) to CF(1) or is implicated in proton conduction. In Azotobacter vinelandii (strain DJ / ATCC BAA-1303), this protein is ATP synthase subunit delta.